Reading from the N-terminus, the 143-residue chain is Anti-sigma F factor (143 aa).

Belongs to the anti-sigma-factor family.

The enzyme catalyses L-seryl-[protein] + ATP = O-phospho-L-seryl-[protein] + ADP + H(+). The catalysed reaction is L-threonyl-[protein] + ATP = O-phospho-L-threonyl-[protein] + ADP + H(+). In terms of biological role, binds to sigma F and blocks its ability to form an RNA polymerase holoenzyme (E-sigma F). Phosphorylates SpoIIAA on a serine residue. This phosphorylation may enable SpoIIAA to act as an anti-anti-sigma factor that counteracts SpoIIAB and thus releases sigma F from inhibition. The protein is Anti-sigma F factor of Thermoanaerobacter pseudethanolicus (strain ATCC 33223 / 39E) (Clostridium thermohydrosulfuricum).